The sequence spans 492 residues: Aerolysin-4 (492 aa).

Residues 1 to 23 (MKKLKITGLSLIISGLLMAQAQA) form the signal peptide. 2 cysteine pairs are disulfide-bonded: Cys-42–Cys-98 and Cys-182–Cys-187. The interaction with host N-linked glycan stretch occupies residues 68-84 (WQISGLANGWVIMGPGY). The tract at residues 256–288 (YGLSEKVTTKNKFKWPLVGETELSIEIAANQSW) is part of the transmembrane beta-barrel after proteolytic activation of the toxin and insertion into the host membrane. Residues 346–355 (RWGGNAWYTH) form an interaction with glycans from host GPI-anchor region. Positions 446–492 (AAASHSSRARNLSAGQGLRLEIPLDAQELSGLGFNNVSLSVTPAANQ) are excised as a propeptide.

This sequence belongs to the aerolysin family. In terms of assembly, homodimer in solution; homoheptamer in the host membrane. After binding to GPI-anchored proteins in target membranes and proteolytic removal of the C-terminal propeptide, the protein assembles into a heptameric pre-pore complex. A further conformation change leads to insertion into the host membrane. Post-translationally, proteolytic cleavage and subsequent release of the propeptide trigger a major conformation change, leading to the formation of a heptameric pre-pore that then inserts into the host membrane.

The protein resides in the secreted. It localises to the host cell membrane. In terms of biological role, secreted, cytolytic toxin that forms pores in host membranes after proteolytic removal of a C-terminal propeptide, leading to destruction of the membrane permeability barrier and cell death. The pores are formed by transmembrane beta-strands and are approximately 3 nm in diameter. The protein is Aerolysin-4 (ahh4) of Aeromonas hydrophila.